We begin with the raw amino-acid sequence, 356 residues long: Glutamine synthetase cytosolic isozyme 1-1 (356 aa).

The region spanning 19 to 99 is the GS beta-grasp domain; that stretch reads IIAEYIWIGG…VMCDCYTPAG (81 aa). The GS catalytic domain occupies 106 to 356; the sequence is KRHNAAKIFS…IAETTIIWKP (251 aa).

The protein belongs to the glutamine synthetase family. As to quaternary structure, homooctamer. As to expression, highly expressed in leaf blades, at intermediate levels in spikelets (rice flower) and at lower levels in roots.

The protein resides in the cytoplasm. It catalyses the reaction L-glutamate + NH4(+) + ATP = L-glutamine + ADP + phosphate + H(+). Its function is as follows. High-affinity glutamine synthetase involved in ammonium assimilation. Seems to be a major component of the cytosolic glutamine synthetic pathway in leaf blades. Plays an important role in maintaining carbon and nitrogen metabolic balance during ammonium assimilation in shoots and roots, thus controlling plant growth and development. Plays an important role in maintaining broad range of metabolites and transcripts involved in the maintenance of plant metabolic homeostasis and development of plastid in roots. This is Glutamine synthetase cytosolic isozyme 1-1 from Oryza sativa subsp. japonica (Rice).